Here is a 154-residue protein sequence, read N- to C-terminus: Large ribosomal subunit protein uL13 (154 aa).

The interval 129-154 (SQHPHEAQQPEALDVGTLNRKNKRIA) is disordered.

This sequence belongs to the universal ribosomal protein uL13 family. As to quaternary structure, part of the 50S ribosomal subunit.

In terms of biological role, this protein is one of the early assembly proteins of the 50S ribosomal subunit, although it is not seen to bind rRNA by itself. It is important during the early stages of 50S assembly. In Bartonella bacilliformis (strain ATCC 35685 / KC583 / Herrer 020/F12,63), this protein is Large ribosomal subunit protein uL13.